The following is a 115-amino-acid chain: Large ribosomal subunit protein bL19 (115 aa).

This sequence belongs to the bacterial ribosomal protein bL19 family.

In terms of biological role, this protein is located at the 30S-50S ribosomal subunit interface and may play a role in the structure and function of the aminoacyl-tRNA binding site. This Desulforamulus reducens (strain ATCC BAA-1160 / DSM 100696 / MI-1) (Desulfotomaculum reducens) protein is Large ribosomal subunit protein bL19.